Reading from the N-terminus, the 188-residue chain is MSKLEAILSQEVEAEIQALLQEAEAKAEAVKREAEEKAKALLQARERALEAQYRAALRRAESAGELLVATARTQARGEVLEEVRRRVREALEALPKKPEWPEVVRKLALEALEALPGAKALVANPEDLPHLEALAKERGVELKAEPALRLGVRAVGAEGKTQVENSLLARLDRAWDALSSKVAQALWG.

The protein belongs to the V-ATPase E subunit family.

Produces ATP from ADP in the presence of a proton gradient across the membrane. This is V-type ATP synthase subunit E from Thermus thermophilus (strain ATCC BAA-163 / DSM 7039 / HB27).